Here is a 214-residue protein sequence, read N- to C-terminus: Ceramide-1-phosphate transfer protein (214 aa).

Asp-56, Lys-60, Arg-106, Arg-110, and His-150 together coordinate an N-acylsphingoid base 1-phosphate.

It belongs to the GLTP family.

It is found in the cytoplasm. It localises to the cytosol. The protein localises to the golgi apparatus. Its subcellular location is the trans-Golgi network membrane. The protein resides in the cell membrane. It is found in the endosome membrane. It localises to the nucleus outer membrane. It catalyses the reaction N-(hexadecanoyl)-sphing-4-enine-1-phosphate(in) = N-(hexadecanoyl)-sphing-4-enine-1-phosphate(out). It carries out the reaction N-(9Z-octadecenoyl)-sphing-4-enine-1-phosphate(in) = N-(9Z-octadecenoyl)-sphing-4-enine-1-phosphate(out). Mediates the intracellular transfer of ceramide-1-phosphate (C1P) between organelle membranes and the cell membrane. Required for normal structure of the Golgi stacks. Can bind phosphoceramides with a variety of aliphatic chains, but has a preference for lipids with saturated C16:0 or monounsaturated C18:1 aliphatic chains, and is inefficient with phosphoceramides containing lignoceryl (C24:0). Plays a role in the regulation of the cellular levels of ceramide-1-phosphate, and thereby contributes to the regulation of phospholipase PLA2G4A activity and the release of arachidonic acid. Has no activity with galactosylceramide, lactosylceramide, sphingomyelin, phosphatidylcholine, phosphatidic acid and ceramide. C1P transfer is stimulated by phosphatidylserine in C1P source vesicles. Regulates autophagy, inflammasome mediated IL1B and IL18 processing, and pyroptosis, but not apoptosis. The chain is Ceramide-1-phosphate transfer protein (CPTP) from Bos taurus (Bovine).